The primary structure comprises 443 residues: Threonine/serine transporter TdcC (443 aa).

The next 11 membrane-spanning stretches (helical) occupy residues 22 to 42, 44 to 64, 97 to 117, 140 to 160, 163 to 183, 207 to 227, 259 to 279, 319 to 339, 366 to 386, 389 to 409, and 423 to 443; these read TTWT…FFPI, AGFG…PIAF, GVVI…IYGV, FVAL…KDLM, VMSY…LSLI, ILVT…FSPI, ASML…FTLS, ASII…LGTL, ISMI…PNIL, IEAM…MYAI, and DNVF…YKLF.

Belongs to the amino acid/polyamine transporter 2 family. SdaC/TdcC subfamily.

It is found in the cell inner membrane. It carries out the reaction L-threonine(in) + H(+)(in) = L-threonine(out) + H(+)(out). The enzyme catalyses L-serine(in) + H(+)(in) = L-serine(out) + H(+)(out). Involved in the import of threonine and serine into the cell, with the concomitant import of a proton (symport system). This chain is Threonine/serine transporter TdcC, found in Salmonella paratyphi A (strain ATCC 9150 / SARB42).